Reading from the N-terminus, the 72-residue chain is ATP synthase subunit c (72 aa).

2 helical membrane-spanning segments follow: residues 1-21 (MSLGVLAAAIAVGLGALGAGI) and 48-68 (MFIGVALVEALPIIGVVFSFI).

Belongs to the ATPase C chain family. As to quaternary structure, F-type ATPases have 2 components, F(1) - the catalytic core - and F(0) - the membrane proton channel. F(1) has five subunits: alpha(3), beta(3), gamma(1), delta(1), epsilon(1). F(0) has three main subunits: a(1), b(2) and c(10-14). The alpha and beta chains form an alternating ring which encloses part of the gamma chain. F(1) is attached to F(0) by a central stalk formed by the gamma and epsilon chains, while a peripheral stalk is formed by the delta and b chains.

Its subcellular location is the cell membrane. In terms of biological role, f(1)F(0) ATP synthase produces ATP from ADP in the presence of a proton or sodium gradient. F-type ATPases consist of two structural domains, F(1) containing the extramembraneous catalytic core and F(0) containing the membrane proton channel, linked together by a central stalk and a peripheral stalk. During catalysis, ATP synthesis in the catalytic domain of F(1) is coupled via a rotary mechanism of the central stalk subunits to proton translocation. Its function is as follows. Key component of the F(0) channel; it plays a direct role in translocation across the membrane. A homomeric c-ring of between 10-14 subunits forms the central stalk rotor element with the F(1) delta and epsilon subunits. The protein is ATP synthase subunit c of Geobacillus stearothermophilus (Bacillus stearothermophilus).